A 239-amino-acid chain; its full sequence is Type II restriction enzyme Eco47II (239 aa).

The enzyme catalyses Endonucleolytic cleavage of DNA to give specific double-stranded fragments with terminal 5'-phosphates.. A P subtype restriction enzyme that recognizes the double-stranded sequence 5'-GGNCC-3'; the cleavage site is unknown. In Escherichia coli, this protein is Type II restriction enzyme Eco47II.